The sequence spans 292 residues: 11-beta-hydroxysteroid dehydrogenase 1 (292 aa).

Over 1–7 (MAFMKKY) the chain is Cytoplasmic. The chain crosses the membrane as a helical; Signal-anchor for type II membrane protein span at residues 8-24 (LLPILGIFLAYYYYSAN). Over 25-292 (EEFRPEMLRG…KYNMERFINN (268 aa)) the chain is Lumenal. NADP(+) contacts are provided by residues 41–67 (GASK…TARS) and 92–93 (TM). N-linked (GlcNAc...) asparagine glycosylation occurs at Asn-95. 119–121 (NHI) contributes to the NADP(+) binding site. Ser-170 is a substrate binding site. Tyr-183 serves as the catalytic Proton acceptor. 183-187 (YSASK) is an NADP(+) binding site. Residue Asn-207 is glycosylated (N-linked (GlcNAc...) asparagine). Residues 216–222 (GLIDTDT) and 218–222 (IDTDT) contribute to the NADP(+) site.

The protein belongs to the short-chain dehydrogenases/reductases (SDR) family. Homodimer. As to expression, liver, kidney, lung, hypothalamus, anterior pituitary and placenta.

It localises to the endoplasmic reticulum membrane. The enzyme catalyses an 11beta-hydroxysteroid + NADP(+) = an 11-oxosteroid + NADPH + H(+). The catalysed reaction is corticosterone + NADP(+) = 11-dehydrocorticosterone + NADPH + H(+). It catalyses the reaction cortisone + NADPH + H(+) = cortisol + NADP(+). It carries out the reaction a 7beta-hydroxysteroid + NADP(+) = a 7-oxosteroid + NADPH + H(+). The enzyme catalyses 7-oxocholesterol + NADPH + H(+) = 7beta-hydroxycholesterol + NADP(+). The catalysed reaction is chenodeoxycholate + NADP(+) = 7-oxolithocholate + NADPH + H(+). It catalyses the reaction 7-oxolithocholate + NADPH + H(+) = ursodeoxycholate + NADP(+). It carries out the reaction glycochenodeoxycholate + NADP(+) = 7-oxoglycolithocholate + NADPH + H(+). The enzyme catalyses taurochenodeoxycholate + NADP(+) = 7-oxotaurolithocholate + NADPH + H(+). The catalysed reaction is tauroursodeoxycholate + NADP(+) = 7-oxotaurolithocholate + NADPH + H(+). It catalyses the reaction glycoursodeoxycholate + NADP(+) = 7-oxoglycolithocholate + NADPH + H(+). It carries out the reaction 7-oxopregnenolone + NADPH + H(+) = 7beta-hydroxypregnenolone + NADP(+). The enzyme catalyses 3beta,7alpha-dihydroxyandrost-5-en-17-one + NADP(+) = 3beta-hydroxy-5-androstene-7,17-dione + NADPH + H(+). The catalysed reaction is 3beta-hydroxy-5-androstene-7,17-dione + NADPH + H(+) = 3beta,7beta-dihydroxyandrost-5-en-17-one + NADP(+). It catalyses the reaction 3beta-hydroxy-5alpha-androstane-7,17-dione + NADPH + H(+) = 3beta,7beta-dihydroxy-5alpha-androstan-17-one + NADP(+). Functionally, controls the reversible conversion of biologically active glucocorticoids such as cortisone to cortisol, and 11-dehydrocorticosterone to corticosterone in the presence of NADP(H). Participates in the corticosteroid receptor-mediated anti-inflammatory response, as well as metabolic and homeostatic processes. Plays a role in the secretion of aqueous humor in the eye, maintaining a normotensive, intraocular environment. Bidirectional in vitro, predominantly functions as a reductase in vivo, thereby increasing the concentration of active glucocorticoids. It has broad substrate specificity, besides glucocorticoids, it accepts other steroid and sterol substrates. Interconverts 7-oxo- and 7-hydroxy-neurosteroids such as 7-oxopregnenolone and 7beta-hydroxypregnenolone, 7-oxodehydroepiandrosterone (3beta-hydroxy-5-androstene-7,17-dione) and 7beta-hydroxydehydroepiandrosterone (3beta,7beta-dihydroxyandrost-5-en-17-one), among others. Catalyzes the stereo-specific conversion of the major dietary oxysterol, 7-ketocholesterol (7-oxocholesterol), into the more polar 7-beta-hydroxycholesterol metabolite. 7-oxocholesterol is one of the most important oxysterols, it participates in several events such as induction of apoptosis, accumulation in atherosclerotic lesions, lipid peroxidation, and induction of foam cell formation. Mediates the 7-oxo reduction of 7-oxolithocholate mainly to chenodeoxycholate, and to a lesser extent to ursodeoxycholate, both in its free form and when conjugated to glycine or taurine, providing a link between glucocorticoid activation and bile acid metabolism. Catalyzes the synthesis of 7-beta-25-dihydroxycholesterol from 7-oxo-25-hydroxycholesterol in vitro, which acts as a ligand for the G-protein-coupled receptor (GPCR) Epstein-Barr virus-induced gene 2 (EBI2) and may thereby regulate immune cell migration. This is 11-beta-hydroxysteroid dehydrogenase 1 (HSD11B1) from Ovis aries (Sheep).